The primary structure comprises 168 residues: 2-oxo-4-hydroxy-4-carboxy-5-ureidoimidazoline decarboxylase (168 aa).

The active-site Proton donor; for OHCU decarboxylase activity is the His70. The segment covering 70 to 79 (HPDLGERTEM) has biased composition (basic and acidic residues). The tract at residues 70–93 (HPDLGERTEMTDASEAEQASAELD) is disordered. Substrate-binding positions include Pro71, 83–87 (SEAEQ), and 118–122 (FVMAV).

This sequence belongs to the OHCU decarboxylase family.

The catalysed reaction is 5-hydroxy-2-oxo-4-ureido-2,5-dihydro-1H-imidazole-5-carboxylate + H(+) = (S)-allantoin + CO2. Its pathway is purine metabolism; urate degradation; (S)-allantoin from urate: step 3/3. Its function is as follows. Catalyzes the stereoselective decarboxylation of 2-oxo-4-hydroxy-4-carboxy-5-ureidoimidazoline (OHCU) to (S)-allantoin. The sequence is that of 2-oxo-4-hydroxy-4-carboxy-5-ureidoimidazoline decarboxylase from Haloferax volcanii (strain ATCC 29605 / DSM 3757 / JCM 8879 / NBRC 14742 / NCIMB 2012 / VKM B-1768 / DS2) (Halobacterium volcanii).